Here is a 225-residue protein sequence, read N- to C-terminus: UPF0128 protein PH1314 (225 aa).

Belongs to the UPF0128 family.

In Pyrococcus horikoshii (strain ATCC 700860 / DSM 12428 / JCM 9974 / NBRC 100139 / OT-3), this protein is UPF0128 protein PH1314.